Reading from the N-terminus, the 946-residue chain is Protein translocase subunit SecA (946 aa).

ATP contacts are provided by residues glutamine 89, 107 to 111 (GEGKT), and aspartate 508. The tract at residues 534-569 (PEDSHKPPVPLQRRKDSSVGFGKEENNSKDKKVNHS) is disordered. The span at 546-569 (RRKDSSVGFGKEENNSKDKKVNHS) shows a compositional bias: basic and acidic residues.

Belongs to the SecA family. In terms of assembly, monomer and homodimer. Part of the essential Sec protein translocation apparatus which comprises SecA, SecYEG and auxiliary proteins SecDF. Other proteins may also be involved.

It is found in the cell inner membrane. The protein resides in the cellular thylakoid membrane. The protein localises to the cytoplasm. It catalyses the reaction ATP + H2O + cellular proteinSide 1 = ADP + phosphate + cellular proteinSide 2.. In terms of biological role, part of the Sec protein translocase complex. Interacts with the SecYEG preprotein conducting channel. Has a central role in coupling the hydrolysis of ATP to the transfer of proteins into and across the cell membrane, serving as an ATP-driven molecular motor driving the stepwise translocation of polypeptide chains across the membrane. Its function is as follows. Probably participates in protein translocation into and across both the cytoplasmic and thylakoid membranes in cyanobacterial cells. This Prochlorococcus marinus (strain SARG / CCMP1375 / SS120) protein is Protein translocase subunit SecA.